Reading from the N-terminus, the 761-residue chain is Phosphoribosylformylglycinamidine synthase subunit PurL (761 aa).

Polar residues predominate over residues 1–13 (MTSRVDTVDNAAS). The tract at residues 1 to 23 (MTSRVDTVDNAASTPDHPQPFAE) is disordered. His-57 is a catalytic residue. ATP-binding residues include Tyr-60 and Lys-104. Residue Glu-106 participates in Mg(2+) binding. Residues 107 to 110 (SHNH) and Arg-129 contribute to the substrate site. His-108 (proton acceptor) is an active-site residue. Asp-130 contributes to the Mg(2+) binding site. Substrate is bound at residue Gln-259. Asp-287 is a Mg(2+) binding site. 331-333 (ESQ) is a substrate binding site. 2 residues coordinate ATP: Asn-519 and Gly-556. Asn-557 contributes to the Mg(2+) binding site. Residue Ser-559 participates in substrate binding.

Belongs to the FGAMS family. As to quaternary structure, monomer. Part of the FGAM synthase complex composed of 1 PurL, 1 PurQ and 2 PurS subunits.

It localises to the cytoplasm. The catalysed reaction is N(2)-formyl-N(1)-(5-phospho-beta-D-ribosyl)glycinamide + L-glutamine + ATP + H2O = 2-formamido-N(1)-(5-O-phospho-beta-D-ribosyl)acetamidine + L-glutamate + ADP + phosphate + H(+). The protein operates within purine metabolism; IMP biosynthesis via de novo pathway; 5-amino-1-(5-phospho-D-ribosyl)imidazole from N(2)-formyl-N(1)-(5-phospho-D-ribosyl)glycinamide: step 1/2. In terms of biological role, part of the phosphoribosylformylglycinamidine synthase complex involved in the purines biosynthetic pathway. Catalyzes the ATP-dependent conversion of formylglycinamide ribonucleotide (FGAR) and glutamine to yield formylglycinamidine ribonucleotide (FGAM) and glutamate. The FGAM synthase complex is composed of three subunits. PurQ produces an ammonia molecule by converting glutamine to glutamate. PurL transfers the ammonia molecule to FGAR to form FGAM in an ATP-dependent manner. PurS interacts with PurQ and PurL and is thought to assist in the transfer of the ammonia molecule from PurQ to PurL. This chain is Phosphoribosylformylglycinamidine synthase subunit PurL, found in Mycobacteroides abscessus (strain ATCC 19977 / DSM 44196 / CCUG 20993 / CIP 104536 / JCM 13569 / NCTC 13031 / TMC 1543 / L948) (Mycobacterium abscessus).